The following is a 123-amino-acid chain: Transmembrane protein 049L (123 aa).

The next 2 helical transmembrane spans lie at 67-87 (VFGA…LWLV) and 104-121 (LSLQ…GVYN).

The protein localises to the membrane. The sequence is that of Transmembrane protein 049L from Acheta domesticus (House cricket).